Consider the following 264-residue polypeptide: Glutamate racemase (264 aa).

Residues 11–12 (DS) and 43–44 (YG) contribute to the substrate site. Residue C74 is the Proton donor/acceptor of the active site. A substrate-binding site is contributed by 75–76 (NT). The Proton donor/acceptor role is filled by C193. Substrate is bound at residue 194-195 (TH).

Belongs to the aspartate/glutamate racemases family.

The enzyme catalyses L-glutamate = D-glutamate. It functions in the pathway cell wall biogenesis; peptidoglycan biosynthesis. Functionally, provides the (R)-glutamate required for cell wall biosynthesis. The protein is Glutamate racemase of Bifidobacterium longum (strain DJO10A).